Reading from the N-terminus, the 460-residue chain is Hydroxymethylglutaryl-CoA synthase MYCGRDRAFT_54740 (460 aa).

A (3S)-3-hydroxy-3-methylglutaryl-CoA-binding site is contributed by Ala-35. The active-site Proton donor/acceptor is Glu-86. 8 residues coordinate (3S)-3-hydroxy-3-methylglutaryl-CoA: Cys-120, Asn-158, Thr-162, Ser-212, His-262, Lys-271, Asn-339, and Ser-373. Cys-120 serves as the catalytic Acyl-thioester intermediate. Catalysis depends on His-262, which acts as the Proton donor/acceptor.

This sequence belongs to the thiolase-like superfamily. HMG-CoA synthase family.

The enzyme catalyses acetoacetyl-CoA + acetyl-CoA + H2O = (3S)-3-hydroxy-3-methylglutaryl-CoA + CoA + H(+). It participates in siderophore biosynthesis. Functionally, hydroxymethylglutaryl-CoA synthase involved in the biosynthesis of a ferrichrome A-like siderophors which may contribute to organismal virulence. The first step of siderophore biosynthesis is performed by the HMG-CoA synthase (HMGS) MYCGRDRAFT_54740 which catalyzes the generation of HMG-CoA and CoA using acetoacetyl-CoA and acetyl-CoA as substrates. The enoyl-CoA isomerase/hydratase MYCGRDRAFT_76805 then catalyzes the conversion of HMG-CoA to methylglutaconyl-CoA. The acyltransferase MYCGRDRAFT_85486 then fuses methylglutaconyl-CoA with hydroxyornithine to yield methylglutaconyl hydroxyornithine. Methylglutaconyl hydroxyornithine is then available for use by the nonribosomal peptide synthetase NRPS2 to generate the ferrichrome A-like siderophore. This is Hydroxymethylglutaryl-CoA synthase MYCGRDRAFT_54740 (ERG13) from Zymoseptoria tritici (strain CBS 115943 / IPO323) (Speckled leaf blotch fungus).